A 134-amino-acid polypeptide reads, in one-letter code: ATP synthase epsilon chain (134 aa).

Belongs to the ATPase epsilon chain family. In terms of assembly, F-type ATPases have 2 components, CF(1) - the catalytic core - and CF(0) - the membrane proton channel. CF(1) has five subunits: alpha(3), beta(3), gamma(1), delta(1), epsilon(1). CF(0) has three main subunits: a, b and c.

Its subcellular location is the cellular thylakoid membrane. Its function is as follows. Produces ATP from ADP in the presence of a proton gradient across the membrane. This is ATP synthase epsilon chain from Prochlorococcus marinus (strain MIT 9312).